Reading from the N-terminus, the 344-residue chain is N-acetyl-gamma-glutamyl-phosphate reductase (344 aa).

Residue C150 is part of the active site.

The protein belongs to the NAGSA dehydrogenase family. Type 1 subfamily.

It is found in the cytoplasm. The catalysed reaction is N-acetyl-L-glutamate 5-semialdehyde + phosphate + NADP(+) = N-acetyl-L-glutamyl 5-phosphate + NADPH + H(+). It participates in amino-acid biosynthesis; L-arginine biosynthesis; N(2)-acetyl-L-ornithine from L-glutamate: step 3/4. Functionally, catalyzes the NADPH-dependent reduction of N-acetyl-5-glutamyl phosphate to yield N-acetyl-L-glutamate 5-semialdehyde. The polypeptide is N-acetyl-gamma-glutamyl-phosphate reductase (Pseudomonas paraeruginosa (strain DSM 24068 / PA7) (Pseudomonas aeruginosa (strain PA7))).